The following is a 391-amino-acid chain: Secreted aspartic protease 1 (391 aa).

Residues 1–18 form the signal peptide; it reads MFLKNIFIALAIALLVDA. Residues 19–50 constitute a propeptide, activation peptide; it reads SPAKRSPGFVTLDFDVIKTPVNATGQEGKVKR. A glycan (N-linked (GlcNAc...) asparagine) is linked at Asn-40. One can recognise a Peptidase A1 domain in the interval 64–377; the sequence is YAADITIGSN…DLDDDKISLA (314 aa). The active site involves Asp-82. Position 82–84 (82–84) interacts with pepstatin A; sequence DTG. The cysteines at positions 97 and 109 are disulfide-linked. Position 135–136 (135–136) interacts with pepstatin A; it reads GD. Asp-241 and Asp-263 together coordinate Zn(2+). Asp-267 is an active-site residue. A pepstatin A-binding site is contributed by 267-271; it reads DSGTT. Cys-305 and Cys-343 are disulfide-bonded.

This sequence belongs to the peptidase A1 family. Monomer.

Its subcellular location is the secreted. The catalysed reaction is Preferential cleavage at the carboxyl of hydrophobic amino acids, but fails to cleave 15-Leu-|-Tyr-16, 16-Tyr-|-Leu-17 and 24-Phe-|-Phe-25 of insulin B chain. Activates trypsinogen, and degrades keratin.. With respect to regulation, inhibited by pepstatin A analogs and squash aspartic peptidase inhibitor (SQAPI). Secreted aspartic peptidases (SAPs) are a group of ten acidic hydrolases considered as key virulence factors. These enzymes supply the fungus with nutrient amino acids as well as are able to degrade the selected host's proteins involved in the immune defense. Induces host inflammatory cytokine production in a proteolytic activity-independent way. Plays a role in tissue damage during superficial infection. Moreover, acts toward human hemoglobin though limited proteolysis to generate a variety of antimicrobial hemocidins, enabling to compete with the other microorganisms of the same physiological niche using the microbicidal peptides generated from the host protein. Functionally, plays a key role in defense against host by cleaving histatin-5 (Hst 5), a peptide from human saliva that carries out fungicidal activity. The cleavage rate decreases in an order of SAP2 &gt; SAP9 &gt; SAP3 &gt; SAP7 &gt; SAP4 &gt; SAP1 &gt; SAP8. The first cleavage occurs between residues 'Lys-17' and 'His-18' of Hst 5, giving DSHAKRHHGYKRKFHEK and HHSHRGY peptides. Further fragmentation by SAP1 results in AKRHHGYKRKFHEK and AKRHHGY products. The polypeptide is Secreted aspartic protease 1 (Candida albicans (strain SC5314 / ATCC MYA-2876) (Yeast)).